The following is a 550-amino-acid chain: Zinc finger protein squeeze (550 aa).

The span at 73 to 105 (QQQQQQQQQEMLQQQQQHQAHQEQQQQQQQQQQ) shows a compositional bias: low complexity. The segment at 73–179 (QQQQQQQQQE…GGGGGDGDQS (107 aa)) is disordered. Residues 106–117 (QHHHQQQQHHLK) are compositionally biased toward basic residues. Residues 141–156 (RSPQRPLMSSGSNASS) are compositionally biased toward polar residues. Over residues 164 to 176 (SGGGPGGGGGGDG) the composition is skewed to gly residues. 5 consecutive C2H2-type zinc fingers follow at residues 182 to 204 (YKCASCSKSFANSSYLSQHTRIH), 210 to 232 (YRCEICQRKFTQLSHLQQHIRTH), 238 to 262 (YKCRHAGCPKAFSQLSNLQSHSRCH), 268 to 290 (FKCNSCYKCFADEMTLLEHIPKH), and 299 to 321 (HICNLCGKSYTQETYLQKHLQKH). The interval 399–485 (LQQHQQQQQQ…VPPSHLQQHR (87 aa)) is disordered. Positions 400 to 416 (QQHQQQQQQQQQDMLQQ) are enriched in low complexity. The residue at position 424 (T424) is a Phosphothreonine. Phosphoserine is present on residues S428 and S430. Positions 444–460 (QTTPQHHLQQQQQQQQP) are enriched in low complexity. 2 positions are modified to phosphotyrosine: Y494 and Y496.

It belongs to the krueppel C2H2-type zinc-finger protein family. As to quaternary structure, interacts with nab; which acts as a coactivator. Interacts with ap.

It localises to the nucleus. Transcription factor involved in neuronal fate specification. First required in embryonic CNS development to define the number of cells that express apterous (ap) in the ap thoracic cluster of interneurons. Later on, it plays a central role in the combinatorial code of transcription factors that specifies the fate of the Tv neuron in the ap cluster by participating in the transcription regulation of FMRFa in Tv cells. Also required for projection neuron dendritic targeting. The protein is Zinc finger protein squeeze (sqz) of Drosophila pseudoobscura pseudoobscura (Fruit fly).